Here is a 166-residue protein sequence, read N- to C-terminus: Large ribosomal subunit protein mL41 (166 aa).

Residues 1-26 constitute a mitochondrion transit peptide; the sequence is MQNCIKLVPLALKCPQRAISTSAVLD.

This sequence belongs to the mitochondrion-specific ribosomal protein mL41 family. Component of the mitochondrial ribosome large subunit (39S) which comprises a 16S rRNA and about 50 distinct proteins.

It localises to the mitochondrion. This chain is Large ribosomal subunit protein mL41 (mRpL41), found in Drosophila pseudoobscura pseudoobscura (Fruit fly).